The chain runs to 518 residues: Retinal dehydrogenase 2 (518 aa).

NAD(+)-binding positions include 184 to 186 (IPW), 210 to 213 (KPAE), and 264 to 266 (STE). Glu286 acts as the Proton acceptor in catalysis. Cys320 (nucleophile) is an active-site residue. NAD(+) contacts are provided by residues 366 to 370 (KQYNK) and Glu417.

This sequence belongs to the aldehyde dehydrogenase family. In terms of assembly, homotetramer.

The protein resides in the cytoplasm. The catalysed reaction is retinal + NAD(+) + H2O = retinoate + NADH + 2 H(+). The enzyme catalyses all-trans-retinal + NAD(+) + H2O = all-trans-retinoate + NADH + 2 H(+). It carries out the reaction all-trans-13,14-dihydroretinal + NAD(+) + H2O = all-trans-13,14-dihydroretinoate + NADH + 2 H(+). The protein operates within cofactor metabolism; retinol metabolism. Functionally, catalyzes the NAD-dependent oxidation of aldehyde substrates, such as all-trans-retinal and all-trans-13,14-dihydroretinal, to their corresponding carboxylic acids, all-trans-retinoate and all-trans-13,14-dihydroretinoate, respectively. Retinoate signaling is critical for the transcriptional control of many genes, for instance it is crucial for initiation of meiosis in both male and female. Recognizes retinal as substrate, both in its free form and when bound to cellular retinol-binding protein. Lacks activity with benzaldehyde, acetaldehyde and octanal. Displays complete lack of activity with citral. In Gallus gallus (Chicken), this protein is Retinal dehydrogenase 2 (ALDH1A2).